The primary structure comprises 172 residues: MTHTPKDGPRANQDIRVPRVQLINDEGQHQGVVTIQEALAMAAEVGLDLVEIVPNAEPPVCKIIDLGKLKYQTQKKAAETRKKQKVIEIKEIKMRPNVDVHDYGVKLKAIHRFIGNGDKVKITLRFRGREMAHQDLGLKLLQRVKEDTSEIAKIESEPKLEGRQMMMVIAAK.

The protein belongs to the IF-3 family. In terms of assembly, monomer.

The protein resides in the cytoplasm. In terms of biological role, IF-3 binds to the 30S ribosomal subunit and shifts the equilibrium between 70S ribosomes and their 50S and 30S subunits in favor of the free subunits, thus enhancing the availability of 30S subunits on which protein synthesis initiation begins. This chain is Translation initiation factor IF-3, found in Bartonella henselae (strain ATCC 49882 / DSM 28221 / CCUG 30454 / Houston 1) (Rochalimaea henselae).